A 364-amino-acid polypeptide reads, in one-letter code: Glutamine synthetase (364 aa).

Residues 15 to 94 (VLAEYIWIDA…VLAECWNNDG (80 aa)) form the GS beta-grasp domain. The region spanning 101-364 (HRHECAKLMS…ETKRGEEEGF (264 aa)) is the GS catalytic domain.

The protein belongs to the glutamine synthetase family. As to quaternary structure, homooctamer.

Its subcellular location is the cytoplasm. The enzyme catalyses L-glutamate + NH4(+) + ATP = L-glutamine + ADP + phosphate + H(+). The polypeptide is Glutamine synthetase (GLN1) (Yarrowia lipolytica (strain CLIB 122 / E 150) (Yeast)).